The sequence spans 120 residues: Large ribosomal subunit protein uL18 (120 aa).

The protein belongs to the universal ribosomal protein uL18 family. In terms of assembly, part of the 50S ribosomal subunit; part of the 5S rRNA/L5/L18/L25 subcomplex. Contacts the 5S and 23S rRNAs.

This is one of the proteins that bind and probably mediate the attachment of the 5S RNA into the large ribosomal subunit, where it forms part of the central protuberance. This chain is Large ribosomal subunit protein uL18, found in Staphylococcus epidermidis (strain ATCC 35984 / DSM 28319 / BCRC 17069 / CCUG 31568 / BM 3577 / RP62A).